The sequence spans 1884 residues: MKPEIEQELSHTLLTELLAYQFASPVRWIETQDVFLKQHNTERVIEIGPSPTLAGMASRTIKAKYQSYDAALSLQRQVLCYSKDAKEIYYTPDPAEPPAAEEPKAETGKESAPAASAAAAAATQPAAAVAPPPQSAGPVESIPDEPVKASLLIHVLVAQKLKKPLDAVPMSKAIKDLVNGKSTVQNEILGDLGKEFGSTPEKPEETPLEELAEQFQDTFSGSLGKTSTSLIGRLMSSKMPGGFSITNARKYLESRFGLGPGRQDSVLLTALCNEPASRLGSEGDAKSFLDTMAQKYASHAGISLSSPSAGGASSGAGAAVVDSAALDALIAENKKLARQQLETLARYLQVDLTKGEKAFIKEKEATTVLQQELDLWEAEHGEFYAKGIKPVFSPLKSRTYDSYWNWARQDLLSMWFDILFGKLTSVDRETINQCIQIMNRANPTLIKFMQYHVELCPTYRGETYKLGKRLGEQLIENCKQILGQSPVYKDVSRITGPKTTVSAKGDIVYEEANKESVRKFEQYVFEMAQGGSMTKMKQSSIQEDLARVYKAISKQASRDSKLELQKVYDQLLKVVEGSTEIETEQTTQDALAIPTGSNTPTEEDELSTASDDDEIASLPDKTSIAQPVSSTIPNKTIPFLHIQSKSESGNWEYDRKLSSIYLDGLESAAINGLTFKDKYVLVTGAGAGSIGAEILQGLISGGAKVIVTTSRYSKKVTEYYQNMYARYGAAGSTLIVVPFNQGSKQDVDALVEYIYNDQKKGGLGWDLDVIIPFAAIPENGNGIDNIDSKSEFAHRIMLTNLLRLLGAVKARKTTDTRPAQCILPLSPNHGTFGFDGLYSESKISLETLFNRWYSEDWGTKLTICGAIIGWTRGTGLMSANNIIAEGIEKLGVRTFSQKEMAFNILGLLTPEIVNLCQEEPVMADLNGGLQFIDNLKEFTSKLRNDLTETADIRRAVSIESAIEQKVVNGDNVDSNYNKVTVRPRANMKFDFPTLKSYDEIKQIAPDLEGMLDLENVVVVTGFAEVGPWGNARTRWEMESKGEFSLEGAIEMAWIMGMIKYHNGNLKGKPYSGWIDAKTQTPVDDKDIKAKYEEEILEHSGIRLIEPELFNGYDPKKKQMIQEVVIQHDLEPFECSKETAEQYKHEHGDKCEISEIEESGEYSVRILKGATLFIPKALRFDRLVAGQIPTGWDARTYGIPEDTINQVDPITLYVLVATVEALLSAGITDPYEFYKYVHVSEVGNCSGSGMGGVSALRGMFKDRYADKPVQNDILQESFINTMSAWVNMLLLSASGPIKTPVGACATAVESVDIGIETILSGKAKVVMVGGYDDFQEEGSYEFANMNATSSAIDEFKHGRTPKEMSRPTTTTRNGFMEAQGSGIQVIMSADLALKMGVPIHAVLAMSATATDKIGRSVPAPGKGILTTAREHHGNLKYPSPLLNVKYRKRQLSKRLDQIKSWESSELNYLQEEAHLAKEEFGEEFSEAEFLRERTEEIYRESKRQVADAKKQWGNAFYKSDPRIAPLRGALATFNLTIDDIGVASFHGTSTVANDKNESATIDSMMKHLGRSEGNPVFGVFQKYLTGHPKGAAGAWMLNGAIQILESGIVPGNRNADNVDKVLEQYEYVLYPSRSIQTDGIKAVSVTSFGFGQKGAQAVVVHPDYLYAVLDRSTYEDYAKRVTARNKKTYRYMHNAITRNTMFVAKDKAPYSDELTMDVYLDPLARVSKTKNEFVFTKKSVQSDKSYVSNIANSTAKALSSLNKSSKGVGVDVELLSELNIDNETFLERNFTPEEIKYCQNSANPQASFTGTWSAKEATFKALGVSSQGGGASLKEIEIVRDGNGAPQVVLNDNAKAAAKAAGVKNVNVSISHDDFQATAVALSEF.

Positions 91–141 are disordered; sequence TPDPAEPPAAEEPKAETGKESAPAASAAAAAATQPAAAVAPPPQSAGPVES. Over residues 111 to 129 the composition is skewed to low complexity; the sequence is SAPAASAAAAAATQPAAAV. Positions 147–222 constitute a Carrier domain; the sequence is VKASLLIHVL…EQFQDTFSGS (76 aa). Position 182 is an O-(pantetheine 4'-phosphoryl)serine (Ser-182). Residues 583-613 form a disordered region; the sequence is TEQTTQDALAIPTGSNTPTEEDELSTASDDD. Residues 584–600 are compositionally biased toward polar residues; sequence EQTTQDALAIPTGSNTP. A compositionally biased stretch (acidic residues) spans 601–613; it reads TEEDELSTASDDD. Residues 677–873 are beta-ketoacyl reductase; the sequence is DKYVLVTGAG…CGAIIGWTRG (197 aa). The 541-residue stretch at 1120 to 1660 folds into the Ketosynthase family 3 (KS3) domain; the sequence is IQEVVIQHDL…QKGAQAVVVH (541 aa). Active-site for beta-ketoacyl synthase activity residues include Cys-1303, His-1545, and His-1586. Positions 1770, 1771, and 1772 each coordinate Mg(2+). Acetyl-CoA contacts are provided by residues 1770–1772, Tyr-1796, Ser-1806, 1815–1825, 1839–1842, and 1869–1871; these read DVE, EATFKALGVSS, RDGN, and ISH. Mg(2+) is bound by residues Ser-1870 and His-1871.

It belongs to the thiolase-like superfamily. Fungal fatty acid synthetase subunit alpha family. Fatty acid synthase is composed of alpha and beta subunits.

The catalysed reaction is acetyl-CoA + n malonyl-CoA + 2n NADPH + 4n H(+) = a long-chain-acyl-CoA + n CoA + n CO2 + 2n NADP(+).. It catalyses the reaction a fatty acyl-[ACP] + malonyl-[ACP] + H(+) = a 3-oxoacyl-[ACP] + holo-[ACP] + CO2. It carries out the reaction a (3R)-hydroxyacyl-[ACP] + NADP(+) = a 3-oxoacyl-[ACP] + NADPH + H(+). Functionally, fatty acid synthetase catalyzes the formation of long-chain fatty acids from acetyl-CoA, malonyl-CoA and NADPH. The alpha subunit contains domains for: acyl carrier protein, 3-oxoacyl-[acyl-carrier-protein] reductase, and 3-oxoacyl-[acyl-carrier-protein] synthase. In Candida parapsilosis (strain CDC 317 / ATCC MYA-4646) (Yeast), this protein is Fatty acid synthase subunit alpha (FAS2).